The chain runs to 275 residues: NH(3)-dependent NAD(+) synthetase (275 aa).

Residue Gly-46–Ser-53 participates in ATP binding. Asp-52 contributes to the Mg(2+) binding site. Arg-140 lines the deamido-NAD(+) pocket. Residue Thr-160 participates in ATP binding. Glu-165 contacts Mg(2+). 2 residues coordinate deamido-NAD(+): Lys-173 and Asp-180. Residues Lys-189 and Thr-211 each contribute to the ATP site. His-260–Lys-261 is a deamido-NAD(+) binding site.

The protein belongs to the NAD synthetase family. As to quaternary structure, homodimer.

The catalysed reaction is deamido-NAD(+) + NH4(+) + ATP = AMP + diphosphate + NAD(+) + H(+). It functions in the pathway cofactor biosynthesis; NAD(+) biosynthesis; NAD(+) from deamido-NAD(+) (ammonia route): step 1/1. In terms of biological role, catalyzes the ATP-dependent amidation of deamido-NAD to form NAD. Uses ammonia as a nitrogen source. In Erwinia tasmaniensis (strain DSM 17950 / CFBP 7177 / CIP 109463 / NCPPB 4357 / Et1/99), this protein is NH(3)-dependent NAD(+) synthetase.